A 96-amino-acid chain; its full sequence is Co-chaperonin GroES (96 aa).

Belongs to the GroES chaperonin family. As to quaternary structure, heptamer of 7 subunits arranged in a ring. Interacts with the chaperonin GroEL.

The protein localises to the cytoplasm. Together with the chaperonin GroEL, plays an essential role in assisting protein folding. The GroEL-GroES system forms a nano-cage that allows encapsulation of the non-native substrate proteins and provides a physical environment optimized to promote and accelerate protein folding. GroES binds to the apical surface of the GroEL ring, thereby capping the opening of the GroEL channel. The protein is Co-chaperonin GroES of Albidiferax ferrireducens (strain ATCC BAA-621 / DSM 15236 / T118) (Rhodoferax ferrireducens).